Here is a 335-residue protein sequence, read N- to C-terminus: Methionine aminopeptidase 1D, mitochondrial (335 aa).

A mitochondrion-targeting transit peptide spans 1-19 (MAAPSGVHLLVRRGSHRIF). H161 serves as a coordination point for substrate. Residues D178, D189, and H252 each contribute to the a divalent metal cation site. Residue H259 participates in substrate binding. The a divalent metal cation site is built by E284 and E315.

This sequence belongs to the peptidase M24A family. Methionine aminopeptidase type 1 subfamily. It depends on Co(2+) as a cofactor. Zn(2+) is required as a cofactor. Requires Mn(2+) as cofactor. Fe(2+) serves as cofactor. Overexpressed in colon cancer cell lines and colon tumors as compared to normal tissues (at protein level).

The protein resides in the mitochondrion. It catalyses the reaction Release of N-terminal amino acids, preferentially methionine, from peptides and arylamides.. Its function is as follows. Removes the N-terminal methionine from nascent proteins. The N-terminal methionine is often cleaved when the second residue in the primary sequence is small and uncharged (Met-Ala-, Cys, Gly, Pro, Ser, Thr, or Val). Requires deformylation of the N(alpha)-formylated initiator methionine before it can be hydrolyzed. May play a role in colon tumorigenesis. This is Methionine aminopeptidase 1D, mitochondrial (METAP1D) from Homo sapiens (Human).